A 165-amino-acid chain; its full sequence is Lipoprotein signal peptidase (165 aa).

3 consecutive transmembrane segments (helical) span residues 12 to 32 (WLWV…LILQ), 70 to 90 (WFFA…MYRS), and 102 to 122 (ALII…GFVV). Catalysis depends on residues D123 and D141. Residues 137–157 (FNLADSAICIGAALIVLEGFL) traverse the membrane as a helical segment.

It belongs to the peptidase A8 family.

The protein localises to the cell inner membrane. It catalyses the reaction Release of signal peptides from bacterial membrane prolipoproteins. Hydrolyzes -Xaa-Yaa-Zaa-|-(S,diacylglyceryl)Cys-, in which Xaa is hydrophobic (preferably Leu), and Yaa (Ala or Ser) and Zaa (Gly or Ala) have small, neutral side chains.. It functions in the pathway protein modification; lipoprotein biosynthesis (signal peptide cleavage). This protein specifically catalyzes the removal of signal peptides from prolipoproteins. This chain is Lipoprotein signal peptidase, found in Klebsiella aerogenes (strain ATCC 13048 / DSM 30053 / CCUG 1429 / JCM 1235 / KCTC 2190 / NBRC 13534 / NCIMB 10102 / NCTC 10006 / CDC 819-56) (Enterobacter aerogenes).